The primary structure comprises 715 residues: Phosphoribosylformylglycinamidine synthase subunit PurL (715 aa).

Residue His-33 is part of the active site. ATP is bound at residue Tyr-36. Glu-77 serves as a coordination point for Mg(2+). Substrate-binding positions include 78–81 (SHNH) and Arg-100. The active-site Proton acceptor is the His-79. Residue Asp-101 coordinates Mg(2+). Gln-225 contacts substrate. Asp-253 contributes to the Mg(2+) binding site. 297-299 (ESQ) is a substrate binding site. ATP is bound by residues Asn-475 and Gly-512. A Mg(2+)-binding site is contributed by Asn-513. Substrate is bound at residue Ser-515.

It belongs to the FGAMS family. Monomer. Part of the FGAM synthase complex composed of 1 PurL, 1 PurQ and 2 PurS subunits.

It is found in the cytoplasm. It carries out the reaction N(2)-formyl-N(1)-(5-phospho-beta-D-ribosyl)glycinamide + L-glutamine + ATP + H2O = 2-formamido-N(1)-(5-O-phospho-beta-D-ribosyl)acetamidine + L-glutamate + ADP + phosphate + H(+). The protein operates within purine metabolism; IMP biosynthesis via de novo pathway; 5-amino-1-(5-phospho-D-ribosyl)imidazole from N(2)-formyl-N(1)-(5-phospho-D-ribosyl)glycinamide: step 1/2. Its function is as follows. Part of the phosphoribosylformylglycinamidine synthase complex involved in the purines biosynthetic pathway. Catalyzes the ATP-dependent conversion of formylglycinamide ribonucleotide (FGAR) and glutamine to yield formylglycinamidine ribonucleotide (FGAM) and glutamate. The FGAM synthase complex is composed of three subunits. PurQ produces an ammonia molecule by converting glutamine to glutamate. PurL transfers the ammonia molecule to FGAR to form FGAM in an ATP-dependent manner. PurS interacts with PurQ and PurL and is thought to assist in the transfer of the ammonia molecule from PurQ to PurL. The sequence is that of Phosphoribosylformylglycinamidine synthase subunit PurL from Methanosarcina acetivorans (strain ATCC 35395 / DSM 2834 / JCM 12185 / C2A).